Here is a 303-residue protein sequence, read N- to C-terminus: Taste receptor type 2 member 13 (303 aa).

Residues 1–7 are Extracellular-facing; the sequence is MESALLS. The helical transmembrane segment at 8-28 threads the bilayer; it reads ILTLVIIAEFVIGNLSNGFXV. Residues 29-55 lie on the Cytoplasmic side of the membrane; sequence LINCIDWVSKRQLSSVDKILTFLAISR. Residues 56-76 form a helical membrane-spanning segment; it reads IGLIWELLVSWFLGLHYLAIF. Residues 77-85 lie on the Extracellular side of the membrane; the sequence is VSGTGLRIM. The helical transmembrane segment at 86-106 threads the bilayer; it reads IFSWVVSNHFSLWLATILSIF. Topologically, residues 107–128 are cytoplasmic; sequence YLLKIASFSSPAFLYLKWRVNQ. Residues 129 to 149 traverse the membrane as a helical segment; that stretch reads VILMILLGTLVFLFLNLIQIN. Over 150 to 184 the chain is Extracellular; the sequence is IHIKDWLDRCERNTIWNFSMSGLPTFSVPVKFTMT. N-linked (GlcNAc...) asparagine glycosylation is present at N166. A helical membrane pass occupies residues 185–205; it reads MFSLAPFTVALISFLLLIFSL. The Cytoplasmic segment spans residues 206-232; sequence RKHLQKMQLNYKGHREPRTKAHINALK. Residues 233–253 traverse the membrane as a helical segment; the sequence is IVISFLLLYASFFLCILISWI. Residues 254 to 261 are Extracellular-facing; sequence SELYQNTL. The helical transmembrane segment at 262 to 282 threads the bilayer; sequence IHMFCQTIGVFYPSSHSFLLI. Over 283 to 303 the chain is Cytoplasmic; the sequence is LGNPKLRQASLLVAAKVWAKR.

It belongs to the G-protein coupled receptor T2R family.

The protein resides in the membrane. Receptor that may play a role in the perception of bitterness and is gustducin-linked. May play a role in sensing the chemical composition of the gastrointestinal content. The activity of this receptor may stimulate alpha gustducin, mediate PLC-beta-2 activation and lead to the gating of TRPM5. This chain is Taste receptor type 2 member 13 (TAS2R13), found in Papio hamadryas (Hamadryas baboon).